Here is a 923-residue protein sequence, read N- to C-terminus: Protocadherin gamma-B5 (923 aa).

The signal sequence occupies residues 1-30 (MGSGAGELGRAERLPVLFLFLLSLFCPALC). Cadherin domains follow at residues 31-133 (EQIR…TPKF), 134-242 (TQNS…PPVF), 243-343 (NRDV…SPEV), 344-448 (TFHS…APVF), 449-558 (HQAS…APRV), and 566-671 (DGSA…LPDI). Residues 31-687 (EQIRYRIPEE…SDPQAELQFY (657 aa)) lie on the Extracellular side of the membrane. 2 N-linked (GlcNAc...) asparagine glycosylation sites follow: asparagine 415 and asparagine 541. A helical transmembrane segment spans residues 688 to 708 (LVVALALISVLFLLAVILAVA). The Cytoplasmic segment spans residues 709–923 (LRLRRSSSPA…KKKSGKKEKK (215 aa)). 2 disordered regions span residues 794 to 832 (TSHP…WPNN) and 893 to 923 (ATLT…KEKK). A compositionally biased stretch (polar residues) spans 807-832 (WRFSQAQRPGTSGSQNGDDTGTWPNN). The segment covering 913–923 (NKKKSGKKEKK) has biased composition (basic residues).

It localises to the cell membrane. In terms of biological role, potential calcium-dependent cell-adhesion protein. May be involved in the establishment and maintenance of specific neuronal connections in the brain. The polypeptide is Protocadherin gamma-B5 (PCDHGB5) (Homo sapiens (Human)).